The chain runs to 78 residues: uncharacterized protein (78 aa).

Transmembrane regions (helical) follow at residues 25–45 (IITA…DEVV) and 50–70 (KCAD…FVFV).

Its subcellular location is the membrane. This is an uncharacterized protein from Saccharomyces cerevisiae (strain ATCC 204508 / S288c) (Baker's yeast).